The primary structure comprises 75 residues: Pi-hexatoxin-Hi1d (75 aa).

Disulfide bonds link cysteine 3/cysteine 18, cysteine 10/cysteine 23, cysteine 17/cysteine 33, cysteine 40/cysteine 55, cysteine 47/cysteine 60, and cysteine 54/cysteine 71. Domain repeat units lie at residues 3–33 (CIRKWLSCVDRKNDCCEGLECYKRRHSFEVC) and 40–71 (CLVKWKQCDGRERDCCAGLECWKRSGNKSSVC). The segment at 3-71 (CIRKWLSCVD…KRSGNKSSVC (69 aa)) is 2 X approximate repeats with cysteine pattern C-C-CC-C-C.

The protein belongs to the psalmotoxin-1 family. Double-knot toxin subfamily. In terms of tissue distribution, expressed by the venom gland.

Its subcellular location is the secreted. This toxin potently and selectively inhibits ASIC1a, an isoform of the gene ASIC1. It incompletely inhibits ASIC1a activation in a pH-independent and slowly reversible manner. This toxin acts by binding to and stabilizing the closed state of the channel, thereby impeding the transition into a conducting state. This toxin may bind to the acidic pocket of ASIC1a, since mutation of a key residue of this pocket (Arg-350) abolishes the ability of the toxin to inhibit ASIC1a. In vivo, this toxin protects the brain from neuronal injury when administered up to 8 hours after stroke onset. This chain is Pi-hexatoxin-Hi1d, found in Hadronyche infensa (Fraser island funnel-web spider).